A 653-amino-acid polypeptide reads, in one-letter code: Poly [ADP-ribose] polymerase 2 (653 aa).

The SAP 1 domain occupies 2–36 (SARLRVADVRAELQRRGLDVSGTKPALVRRLDAAI). A disordered region spans residues 64–84 (NCGNNKRKRSGDGGEEGNGDT). The Nuclear localization signal signature appears at 69 to 72 (KRKR). The region spanning 91 to 125 (LEGMSYRELQGLAKARGVAANGGKKDVIQRLLSAT) is the SAP 2 domain. In terms of domain architecture, WGR spans 179–276 (NYHVLQVGDE…KNFKCYAKKY (98 aa)). The PARP alpha-helical domain occupies 301–419 (ETKLETRIAQ…EIEIATKLLE (119 aa)). The PARP catalytic domain occupies 427–653 (DPLYARYKQL…LHVNFNFKRR (227 aa)).

It belongs to the ARTD/PARP family.

It localises to the nucleus. It carries out the reaction NAD(+) + (ADP-D-ribosyl)n-acceptor = nicotinamide + (ADP-D-ribosyl)n+1-acceptor + H(+).. The enzyme catalyses L-aspartyl-[protein] + NAD(+) = 4-O-(ADP-D-ribosyl)-L-aspartyl-[protein] + nicotinamide. The catalysed reaction is L-glutamyl-[protein] + NAD(+) = 5-O-(ADP-D-ribosyl)-L-glutamyl-[protein] + nicotinamide. Involved in the base excision repair (BER) pathway, by catalyzing the poly(ADP-ribosyl)ation of a limited number of acceptor proteins involved in chromatin architecture and in DNA metabolism. This modification follows DNA damages and appears as an obligatory step in a detection/signaling pathway leading to the reparation of DNA strand breaks. The polypeptide is Poly [ADP-ribose] polymerase 2 (PARP2) (Zea mays (Maize)).